The primary structure comprises 193 residues: Dephospho-CoA kinase (193 aa).

Residues 5–193 (IIGLTGGIAS…KKVERFCETI (189 aa)) form the DPCK domain. 13-18 (ASGKST) contacts ATP.

It belongs to the CoaE family.

Its subcellular location is the cytoplasm. The enzyme catalyses 3'-dephospho-CoA + ATP = ADP + CoA + H(+). The protein operates within cofactor biosynthesis; coenzyme A biosynthesis; CoA from (R)-pantothenate: step 5/5. Catalyzes the phosphorylation of the 3'-hydroxyl group of dephosphocoenzyme A to form coenzyme A. In Fusobacterium nucleatum subsp. nucleatum (strain ATCC 25586 / DSM 15643 / BCRC 10681 / CIP 101130 / JCM 8532 / KCTC 2640 / LMG 13131 / VPI 4355), this protein is Dephospho-CoA kinase.